Consider the following 283-residue polypeptide: ATP phosphoribosyltransferase (283 aa).

This sequence belongs to the ATP phosphoribosyltransferase family. Long subfamily. Requires Mg(2+) as cofactor.

The protein localises to the cytoplasm. The enzyme catalyses 1-(5-phospho-beta-D-ribosyl)-ATP + diphosphate = 5-phospho-alpha-D-ribose 1-diphosphate + ATP. Its pathway is amino-acid biosynthesis; L-histidine biosynthesis; L-histidine from 5-phospho-alpha-D-ribose 1-diphosphate: step 1/9. With respect to regulation, feedback inhibited by histidine. In terms of biological role, catalyzes the condensation of ATP and 5-phosphoribose 1-diphosphate to form N'-(5'-phosphoribosyl)-ATP (PR-ATP). Has a crucial role in the pathway because the rate of histidine biosynthesis seems to be controlled primarily by regulation of HisG enzymatic activity. This chain is ATP phosphoribosyltransferase, found in Bifidobacterium longum (strain DJO10A).